A 323-amino-acid chain; its full sequence is UDP-galactose/UDP-glucose transporter 7 (323 aa).

Topologically, residues 1–10 are cytoplasmic; it reads MEVQAEMEPT. The helical transmembrane segment at 11-31 threads the bilayer; it reads SSISLVAAVSYGIASMAMVFI. At 32-35 the chain is on the lumenal side; it reads NKAV. The chain crosses the membrane as a helical span at residues 36-58; the sequence is IMQYPHSMTVLTLQQLATSLLIH. The Cytoplasmic segment spans residues 59–78; that stretch reads FGRRMGYTRAKGIDMATAKK. A helical membrane pass occupies residues 79–97; that stretch reads LLPVSIFYNANVAFALASL. At 98-101 the chain is on the lumenal side; it reads KGVN. Residues 102-124 traverse the membrane as a helical segment; that stretch reads IPMYIAIKRLTPLAVLISGVLFG. At 125-132 the chain is on the cytoplasmic side; the sequence is KGKPTTQV. Residues 133 to 153 traverse the membrane as a helical segment; the sequence is ALSVLLTAAGCVIAALGDFSF. A topological domain (lumenal) is located at residue D154. Residues 155 to 175 form a helical membrane-spanning segment; it reads LFGYGLALTSVFFQTMYLVLV. Residues 176-186 lie on the Cytoplasmic side of the membrane; it reads EKSGAEDGLSS. A helical transmembrane segment spans residues 187–207; sequence IEIMFYNSFLSLPFLSILIIV. At 208-226 the chain is on the lumenal side; sequence TGEFPNSLSLLLAKCSYLP. Residues 227–247 form a helical membrane-spanning segment; the sequence is FLVILILSLVMGIVLNFTMFL. Residues 248-252 are Cytoplasmic-facing; sequence CTIVN. Residues 253–275 form a helical membrane-spanning segment; it reads SALTTTIVGVLKGVGSTTLGFVL. Over 276–278 the chain is Lumenal; that stretch reads LGG. The helical transmembrane segment at 279–301 threads the bilayer; it reads VEVHALNVSGLVVNTAGGVWYSY. Over 302 to 323 the chain is Cytoplasmic; that stretch reads AKYRQKKAKPAKLMSDLEAHKK.

The protein belongs to the TPT transporter family. UGnT (TC 2.A.7.15) subfamily. Widely expressed with highest expression in roots.

The protein resides in the golgi apparatus membrane. Its function is as follows. Nucleotide-sugar transporter that transports UDP-glucose and UDP-galactose. Plays a role in lateral root and root hair development. In Arabidopsis thaliana (Mouse-ear cress), this protein is UDP-galactose/UDP-glucose transporter 7.